A 237-amino-acid chain; its full sequence is tRNA(His) guanylyltransferase (237 aa).

Ala-2 bears the N-acetylalanine mark. 2 residues coordinate Mg(2+): Asp-29 and Gly-30. Residues Lys-32, Phe-33, His-34, Lys-44, and Asp-47 each coordinate GTP. Position 77 (Asp-77) interacts with Mg(2+).

It belongs to the tRNA(His) guanylyltransferase family. In terms of assembly, homotetramer. It depends on Mg(2+) as a cofactor.

It carries out the reaction a 5'-end ribonucleotide-tRNA(His) + GTP + ATP + H2O = a 5'-end phospho-guanosine-ribonucleotide-tRNA(His) + AMP + 2 diphosphate + H(+). It catalyses the reaction a 5'-end ribonucleotide-RNA + a ribonucleoside 5'-triphosphate + ATP + H2O = a 5'-end phospho-ribonucleoside-ribonucleotide-RNA + AMP + 2 diphosphate + H(+). Acts as a tRNA(His) guanylyltransferase that catalyzes 3'-5' addition of a single guanosine residue to the -1 position of tRNA(His), to form a non-Watson-Crick G(-1):A-73 base pair. After addition of G(-1), THG1 removes pyrophosphate from the tRNA 5'-end, generating 5'-monophosphorylated G(-1)-containing tRNA which is important for recognition of tRNA(His) by its cognate histidyl-tRNA synthetase. In addition to the single-G(-1) addition reaction, THG1 polymerizes multiple G residues to the 5'-end of tRNA(His) variants using the 3'-end of the tRNA(His) acceptor stem as a template. This is tRNA(His) guanylyltransferase from Saccharomyces cerevisiae (strain ATCC 204508 / S288c) (Baker's yeast).